The primary structure comprises 126 residues: Ribulose bisphosphate carboxylase small subunit, chloroplastic 1 (126 aa).

This sequence belongs to the RuBisCO small chain family. As to quaternary structure, heterohexadecamer of 8 large and 8 small subunits.

The protein localises to the plastid. Its subcellular location is the chloroplast. RuBisCO catalyzes two reactions: the carboxylation of D-ribulose 1,5-bisphosphate, the primary event in carbon dioxide fixation, as well as the oxidative fragmentation of the pentose substrate. Both reactions occur simultaneously and in competition at the same active site. Although the small subunit is not catalytic it is essential for maximal activity. This Acetabularia peniculus (Green alga) protein is Ribulose bisphosphate carboxylase small subunit, chloroplastic 1.